A 300-amino-acid chain; its full sequence is Dioxygenase FUM3 (300 aa).

Fe cation contacts are provided by His146, Asp148, and His222.

The protein belongs to the PhyH family. In terms of assembly, homodimer. Requires Fe cation as cofactor.

It participates in mycotoxin biosynthesis. In terms of biological role, dioxygenase; part of the gene cluster that mediates the biosynthesis of fumonisins B1 (FB1), B2 (FB2), B3 (FB3), and B4 (FB4), which are carcinogenic mycotoxins. Within the pathway, FUM3 performs the C-5 hydroxylation present in FB1 and FB2 and which occurs late in the biosynthesis. The biosynthesis starts with the FUM1-catalyzed carbon chain assembly from one molecule of acetyl-CoA, eight molecules of malonyl-CoA, and two molecules of methionine (in S-adenosyl form). The C18 polyketide chain is released from the enzyme by a nucleophilic attack of a carbanion, which is derived from R-carbon of alanine by decarboxylation, on the carbonyl carbon of polyketide acyl chain. This step is catalyzed by the pyridoxal 5'-phosphate-dependent aminoacyl transferase FUM8. The resultant 3-keto intermediate is then stereospecifically reduced to a 3-hydroxyl product by reductase FUM13. Subsequent oxidations at C-10 by the cytochrome P450 monooxygenase FUM2, C-14 and C-15 by FUM6, FUM12 or FUM15, tricarballylic esterification of the hydroxyl groups on C-14 and C-15 by acyltransferase FUM14, and C-5 hydroxylation by 2-keto-glutarate-dependent dioxygenase FUM3 furnish the biosynthesis of fumonisins. The tricarballylic moieties are most likely derived from the citric acid cycle, and their addition to the carbon backbone may involve FUM7, FUM10, FUM11 and FUM14. The chain is Dioxygenase FUM3 from Gibberella moniliformis (strain M3125 / FGSC 7600) (Maize ear and stalk rot fungus).